The sequence spans 301 residues: Glutathione transport system permease protein GsiD (301 aa).

6 helical membrane-spanning segments follow: residues 37 to 57 (VAVA…WAQY), 103 to 123 (LAAG…LGLL), 141 to 161 (VLFA…MGSG), 162 to 182 (MANV…RLVR), 220 to 240 (IVVF…SLSF), and 264 to 284 (VIAP…VLAF). In terms of domain architecture, ABC transmembrane type-1 spans 99-288 (TRISLAAGIF…LTVLAFNLLG (190 aa)).

It belongs to the binding-protein-dependent transport system permease family. The complex is composed of two ATP-binding proteins (GsiA), two transmembrane proteins (GsiC and GsiD) and a solute-binding protein (GsiB).

It localises to the cell inner membrane. In terms of biological role, part of the ABC transporter complex GsiABCD involved in glutathione import. Probably responsible for the translocation of the substrate across the membrane. The protein is Glutathione transport system permease protein GsiD of Pectobacterium atrosepticum (strain SCRI 1043 / ATCC BAA-672) (Erwinia carotovora subsp. atroseptica).